A 520-amino-acid chain; its full sequence is Developmental regulatory protein wetA (520 aa).

4 disordered regions span residues 110–149 (ATHA…NERR), 260–294 (HPSS…SWQS), 388–453 (TTSQ…GSNK), and 471–496 (LTGV…RRRK). Low complexity predominate over residues 261-294 (PSSSTLTNSSPSSADDMFSSSHSSDPHSLSSWQS). Polar residues predominate over residues 388–401 (TTSQVHNVSRSPSL). Residues 420-429 (PVHRRTHSRK) are compositionally biased toward basic residues. Residues 436–453 (NAPKPAKASGSSSRGSNK) show a composition bias toward low complexity.

This sequence belongs to the wetA family.

BrlA, abaA and wetA are pivotal regulators of conidiophore development and conidium maturation. They act individually and together to regulate their own expression and that of numerous other sporulation-specific genes. Plays a crucial role in pigmentation and conidial cell wall integrity. In Penicillium digitatum (strain PHI26 / CECT 20796) (Green mold), this protein is Developmental regulatory protein wetA.